Reading from the N-terminus, the 205-residue chain is Putative protein phosphatase inhibitor 2-like protein 1 (205 aa).

Disordered stretches follow at residues 1 to 44, 64 to 92, 107 to 148, and 171 to 205; these read MAAS…SKKS, GLMK…TETT, AEGL…TLHY, and VEEM…SRSS. 2 required for binding PPP1CC regions span residues 12–17 and 43–55; these read KGILKD and KSQK…ILAT. The span at 17–26 shows a compositional bias: polar residues; it reads DNTSTTSSMV. Residues 30–44 show a composition bias toward basic and acidic residues; the sequence is EHPRGSVHEQLSKKS. At threonine 73 the chain carries Phosphothreonine; by GSK3. Composition is skewed to acidic residues over residues 80 to 91 and 121 to 130; these read GDDEDACSDTET and SSGEEDSDLS. The residue at position 87 (serine 87) is a Phosphoserine; by CK2. Residues 131–144 show a composition bias toward basic and acidic residues; that stretch reads PEEREKKRQFEMRR. The interval 147 to 150 is required for binding PPP1CC catalytic center, displacing metal ions and inhibition of PPP1CC catalytic activity; sequence HYNE. The segment covering 182–205 has biased composition (polar residues); it reads SMNTEESNQGSTASDQQQNKSRSS.

It belongs to the protein phosphatase inhibitor 2 family.

Its function is as follows. Inhibitor of protein-phosphatase 1. The protein is Putative protein phosphatase inhibitor 2-like protein 1 (PPP1R2P1) of Homo sapiens (Human).